We begin with the raw amino-acid sequence, 84 residues long: Small ribosomal subunit protein bS20 (84 aa).

Belongs to the bacterial ribosomal protein bS20 family.

Functionally, binds directly to 16S ribosomal RNA. The sequence is that of Small ribosomal subunit protein bS20 from Lacticaseibacillus casei (strain BL23) (Lactobacillus casei).